We begin with the raw amino-acid sequence, 340 residues long: Dihydroorotase (340 aa).

2 residues coordinate Zn(2+): His14 and His16. Substrate-binding positions include 16 to 18 (HLR) and Asn42. Zn(2+) contacts are provided by Lys100, His137, and His175. Residue Lys100 is modified to N6-carboxylysine. His137 lines the substrate pocket. Leu220 is a binding site for substrate. Asp248 provides a ligand contact to Zn(2+). The active site involves Asp248. Substrate-binding residues include His252 and Ala264.

The protein belongs to the metallo-dependent hydrolases superfamily. DHOase family. Class II DHOase subfamily. As to quaternary structure, homodimer. Zn(2+) serves as cofactor.

It carries out the reaction (S)-dihydroorotate + H2O = N-carbamoyl-L-aspartate + H(+). The protein operates within pyrimidine metabolism; UMP biosynthesis via de novo pathway; (S)-dihydroorotate from bicarbonate: step 3/3. In terms of biological role, catalyzes the reversible cyclization of carbamoyl aspartate to dihydroorotate. This Sphingopyxis alaskensis (strain DSM 13593 / LMG 18877 / RB2256) (Sphingomonas alaskensis) protein is Dihydroorotase.